Here is an 822-residue protein sequence, read N- to C-terminus: von Willebrand factor A domain-containing protein 5A (822 aa).

Residues 1-131 (MEHHWGLITG…KVAVTLRYVQ (131 aa)) form the VIT domain. The 189-residue stretch at 281-469 (EFVFLMDRSG…LALQCALDDI (189 aa)) folds into the VWFA domain. The tract at residues 657 to 682 (SMPSPAPIENQGVADSSNEKSNSQNE) is disordered. The span at 669 to 680 (VADSSNEKSNSQ) shows a compositional bias: polar residues.

Its function is as follows. May play a role in tumorigenesis as a tumor suppressor. Altered expression of this protein and disruption of the molecular pathway it is involved in may contribute directly to or modify tumorigenesis. The protein is von Willebrand factor A domain-containing protein 5A (Vwa5a) of Rattus norvegicus (Rat).